The following is a 456-amino-acid chain: MSSRPQNIGIKAIELYFPSQYVDQVELEKFDGVSAGKYTIGLGQTKMSFCDDREDIYSFALTATSKLLKNYNIDPNSIGFLEVGTETLLDKSKSVKSVLMQLFGDNTNIEGVDTINACYGGTNAVFNAINWVESSAWDGRDAIVVAGDIALYAKGNARPTGGAGAVALLIGPNAPIVAEPGLRGTYMQHAYDFYKPDLTSEYPYVDGHYSVNCYSKALDAAYRAYCKREAKQANGTNGVTNGDASTKTGLDRFDYMAFHSPTCKLVQKSYARLLYHDYLANADSPVFAEVAPELRDMDYEKSLTDKVVEKTFMTLTKKRFQERVNPAIQVATNCGNMYCGSVWSGLASLISVVDNKDLEGKRIGLFSYGSGLAASFLSFRINGSVDKISDVLNIPSRLESRRAVPPETYDQMCDLRKQAHLQKDYTPKGDPSTILPGTYYLTKVDDMFKREYAIKE.

Alanine 35 is a binding site for (3S)-3-hydroxy-3-methylglutaryl-CoA. Catalysis depends on glutamate 86, which acts as the Proton donor/acceptor. (3S)-3-hydroxy-3-methylglutaryl-CoA-binding residues include cysteine 118, asparagine 156, threonine 160, serine 210, histidine 259, lysine 268, asparagine 336, and serine 370. Catalysis depends on cysteine 118, which acts as the Acyl-thioester intermediate. Histidine 259 functions as the Proton donor/acceptor in the catalytic mechanism.

Belongs to the thiolase-like superfamily. HMG-CoA synthase family.

It catalyses the reaction acetoacetyl-CoA + acetyl-CoA + H2O = (3S)-3-hydroxy-3-methylglutaryl-CoA + CoA + H(+). Its pathway is metabolic intermediate biosynthesis; (R)-mevalonate biosynthesis; (R)-mevalonate from acetyl-CoA: step 2/3. Hydroxymethylglutaryl-CoA synthase; part of the first module of ergosterol biosynthesis pathway that includes the early steps of the pathway, conserved across all eukaryotes, and which results in the formation of mevalonate from acetyl-coenzyme A (acetyl-CoA). ERG13 condenses acetyl-CoA with acetoacetyl-CoA to form hydroxymethylglutaryl-CoA (HMG-CoA). The first module starts with the action of the cytosolic acetyl-CoA acetyltransferase ERG10B that catalyzes the formation of acetoacetyl-CoA. The hydroxymethylglutaryl-CoA synthases ERG13 then condenses acetyl-CoA with acetoacetyl-CoA to form HMG-CoA. The rate-limiting step of the early module is the reduction to mevalonate by the 3-hydroxy-3-methylglutaryl-coenzyme A (HMG-CoA) reductases HMG1. The sequence is that of Hydroxymethylglutaryl-CoA synthase ERG13 from Gibberella zeae (strain ATCC MYA-4620 / CBS 123657 / FGSC 9075 / NRRL 31084 / PH-1) (Wheat head blight fungus).